A 738-amino-acid polypeptide reads, in one-letter code: Integrin beta-2-like protein (738 aa).

The N-terminal stretch at 1–22 (MLGQCTLLPVLAGLLSLESALS) is a signal peptide. Residues 23-671 (QLCTKDNVST…LVCAEISNTT (649 aa)) are Extracellular-facing. The PSI domain maps to 24-74 (LCTKDNVSTCQDCIRSGPSCAWCQKLNFTGRGEPDSVRCDTPEQLLLKGCT). Disulfide bonds link Cys-25-Cys-419, Cys-33-Cys-43, Cys-36-Cys-73, Cys-46-Cys-62, Cys-218-Cys-258, Cys-358-Cys-372, Cys-421-Cys-439, Cys-431-Cys-442, Cys-444-Cys-453, Cys-455-Cys-486, Cys-469-Cys-484, Cys-478-Cys-489, Cys-491-Cys-506, Cys-508-Cys-531, Cys-513-Cys-529, Cys-521-Cys-534, Cys-536-Cys-545, Cys-547-Cys-570, Cys-554-Cys-568, Cys-562-Cys-573, Cys-575-Cys-584, Cys-594-Cys-603, and Cys-600-Cys-664. Asn-29 is a glycosylation site (N-linked (GlcNAc...) asparagine). N-linked (GlcNAc...) asparagine glycans are attached at residues Asn-50, Asn-102, Asn-173, Asn-226, Asn-252, Asn-342, Asn-360, and Asn-386. The 204-residue stretch at 126-329 (SVDLYFLMGL…DSSNVAQLIR (204 aa)) folds into the VWFA domain. 4 I-EGF domains span residues 421 to 454 (CQEQ…KNCE), 455 to 507 (CQTQ…QYCE), 508 to 546 (CNNV…SACQ), and 547 to 585 (CRMS…PLCE). Asn-473 is a glycosylation site (N-linked (GlcNAc...) asparagine). 2 N-linked (GlcNAc...) asparagine glycosylation sites follow: Asn-627 and Asn-669. A helical membrane pass occupies residues 672–692 (ILLGVIVGVLLAVIFLLVYCM). Over 693 to 738 (VYLKGTQKAAKLPRKGGAQSTLAQQPHFQEPHHVEPVWNQERQGTQ) the chain is Cytoplasmic. Positions 709 to 738 (GAQSTLAQQPHFQEPHHVEPVWNQERQGTQ) are disordered. Polar residues predominate over residues 710-719 (AQSTLAQQPH).

This sequence belongs to the integrin beta chain family. Monomer and homodimer. Unlike integrin beta chains, no alpha chain partner has yet been found. Post-translationally, N-glycosylated. Expressed predominantly in maturing and mature neutrophils.

Its subcellular location is the cell membrane. During inflammatory stimulation, plays a role in retaining Cxcl13-expressing cells at the site of the inflammatory response. In Mus musculus (Mouse), this protein is Integrin beta-2-like protein.